Consider the following 146-residue polypeptide: Hemoglobin subunit beta (146 aa).

A Globin domain is found at 2–146 (PFSAHEEKLI…VAAALSVEYY (145 aa)). Positions 63 and 92 each coordinate heme b.

Belongs to the globin family. As to quaternary structure, heterotetramer of two alpha chains and two beta chains. When oxygenated in vitro, exists virtually only in polymeric form. When deoxygenated, forms tetramers, octamers and larger polymers. Red blood cells.

In terms of biological role, involved in oxygen transport from the lung to the various peripheral tissues. This is Hemoglobin subunit beta from Paleosuchus palpebrosus (Cuvier's smooth-fronted caiman).